Reading from the N-terminus, the 718-residue chain is Quinohemoprotein alcohol dehydrogenase ADH-IIG (718 aa).

A signal peptide spans 1-29 (MRQTGLASLPLKSLAVAVLLSLAGTPALA). Glutamate 92 is a binding site for pyrroloquinoline quinone. Cysteine 138 and cysteine 139 are joined by a disulfide. Pyrroloquinoline quinone contacts are provided by residues arginine 144, threonine 189, and 205–206 (GA). Glutamate 207 provides a ligand contact to Ca(2+). Threonine 264 is a binding site for pyrroloquinoline quinone. Residues asparagine 284 and aspartate 329 each coordinate Ca(2+). Aspartate 329 serves as the catalytic Proton acceptor. Lysine 356 serves as a coordination point for pyrroloquinoline quinone. Tryptophan 415 serves as a coordination point for substrate. Residues 419-420 (DW) and alanine 571 contribute to the pyrroloquinoline quinone site. Residues 622–699 (ASIEAGAKLY…QIHQYLIKRA (78 aa)) enclose the Cytochrome c domain. Cysteine 635, cysteine 638, histidine 639, and methionine 676 together coordinate heme c.

The protein belongs to the bacterial PQQ dehydrogenase family. Monomer. Pyrroloquinoline quinone serves as cofactor. The cofactor is Ca(2+). It depends on heme c as a cofactor.

The protein resides in the periplasm. The enzyme catalyses 2 oxidized [azurin] + a primary alcohol = 2 reduced [azurin] + an aldehyde + 2 H(+). With respect to regulation, exhibits higher affinity for 1-butanol compared to 1,2-propanediol but inhibited by 10 mM 1-butanol. Catalyzes the dye-linked oxidation of primary alcohols to the corresponding aldehydes and the (subsequent) oxidation of the aldehydes to carboxylic acids. Active with primary alcohols, glycerol, 1,2-propanediol, 1,3-propanediol but not with methanol or sugar alcohols such as D-sorbitol. The polypeptide is Quinohemoprotein alcohol dehydrogenase ADH-IIG (Pseudomonas putida (Arthrobacter siderocapsulatus)).